The chain runs to 1164 residues: IgA FC receptor (1164 aa).

A signal peptide spans 1–37 (MFKSNYERKMRYSIRKFSVGVASVAVASLFMGSVAHA). Disordered regions lie at residues 54 to 75 (KPYPSMAQTDQGNNSSSSELET) and 167 to 220 (HEEV…EDKD). Over residues 59–73 (MAQTDQGNNSSSSEL) the composition is skewed to polar residues. Basic and acidic residues-rich tracts occupy residues 167–176 (HEEVEKDKKA) and 183–220 (KQSDTKVDLSNIDKELNHQKSQVEKMAEQKGITNEDKD). 2 igA-binding regions span residues 199 to 438 (NHQK…KIEL) and 439 to 826 (TVSP…ETNT). The 101-residue stretch at 434–534 (QKIELTVSPE…VEKTFTITVQ (101 aa)) folds into the Ig-like domain. The segment covering 536–564 (KEEKQVPKTPEQKDSKTEEKVPQEPKSND) has biased composition (basic and acidic residues). Disordered regions lie at residues 536-567 (KEEKQVPKTPEQKDSKTEEKVPQEPKSNDKNQ) and 823-947 (ETNT…PDGL). Residues 911 to 920 (PKIPEPPKTP) are compositionally biased toward pro residues. The LPXTG sorting signal motif lies at 1132-1136 (LPYTG). Position 1135 is a pentaglycyl murein peptidoglycan amidated threonine (threonine 1135). Positions 1136–1164 (GVASNLVLEIMGLLGLIGTSFIAMKRRKS) are cleaved as a propeptide — removed by sortase.

The protein resides in the secreted. The protein localises to the cell wall. This is IgA FC receptor (bag) from Streptococcus agalactiae.